The sequence spans 245 residues: tRNA (guanine-N(7)-)-methyltransferase (245 aa).

Glu-75, Glu-100, Asp-127, and Asp-150 together coordinate S-adenosyl-L-methionine. Asp-150 is a catalytic residue. Substrate contacts are provided by residues Lys-154, Asp-186, and 223–226 (TKFE).

It belongs to the class I-like SAM-binding methyltransferase superfamily. TrmB family.

The enzyme catalyses guanosine(46) in tRNA + S-adenosyl-L-methionine = N(7)-methylguanosine(46) in tRNA + S-adenosyl-L-homocysteine. Its pathway is tRNA modification; N(7)-methylguanine-tRNA biosynthesis. Its function is as follows. Catalyzes the formation of N(7)-methylguanine at position 46 (m7G46) in tRNA. This chain is tRNA (guanine-N(7)-)-methyltransferase, found in Photobacterium profundum (strain SS9).